We begin with the raw amino-acid sequence, 156 residues long: Small ribosomal subunit protein uS7 (156 aa).

This sequence belongs to the universal ribosomal protein uS7 family. As to quaternary structure, part of the 30S ribosomal subunit. Contacts proteins S9 and S11.

Its function is as follows. One of the primary rRNA binding proteins, it binds directly to 16S rRNA where it nucleates assembly of the head domain of the 30S subunit. Is located at the subunit interface close to the decoding center, probably blocks exit of the E-site tRNA. In Frankia alni (strain DSM 45986 / CECT 9034 / ACN14a), this protein is Small ribosomal subunit protein uS7.